Here is a 237-residue protein sequence, read N- to C-terminus: Phosphoribosylaminoimidazole-succinocarboxamide synthase (237 aa).

It belongs to the SAICAR synthetase family.

It catalyses the reaction 5-amino-1-(5-phospho-D-ribosyl)imidazole-4-carboxylate + L-aspartate + ATP = (2S)-2-[5-amino-1-(5-phospho-beta-D-ribosyl)imidazole-4-carboxamido]succinate + ADP + phosphate + 2 H(+). It functions in the pathway purine metabolism; IMP biosynthesis via de novo pathway; 5-amino-1-(5-phospho-D-ribosyl)imidazole-4-carboxamide from 5-amino-1-(5-phospho-D-ribosyl)imidazole-4-carboxylate: step 1/2. In Photorhabdus laumondii subsp. laumondii (strain DSM 15139 / CIP 105565 / TT01) (Photorhabdus luminescens subsp. laumondii), this protein is Phosphoribosylaminoimidazole-succinocarboxamide synthase.